We begin with the raw amino-acid sequence, 103 residues long: A-type ATP synthase subunit F (103 aa).

Belongs to the V-ATPase F subunit family. In terms of assembly, has multiple subunits with at least A(3), B(3), C, D, E, F, H, I and proteolipid K(x).

It is found in the cell membrane. Functionally, component of the A-type ATP synthase that produces ATP from ADP in the presence of a proton gradient across the membrane. This is A-type ATP synthase subunit F from Pyrococcus abyssi (strain GE5 / Orsay).